A 202-amino-acid chain; its full sequence is Tetranectin (202 aa).

Positions Met1–Ala21 are cleaved as a signal peptide. Cystine bridges form between Cys71-Cys81, Cys98-Cys197, and Cys173-Cys189. The region spanning Val77 to Gln198 is the C-type lectin domain.

As to quaternary structure, homotrimer. In terms of tissue distribution, highest expression in lung, skeletal muscle and heart. Expressed in retina.

It is found in the secreted. Tetranectin binds to plasminogen and to isolated kringle 4. May be involved in the packaging of molecules destined for exocytosis. Plays a role in retinal function. The protein is Tetranectin (Clec3b) of Mus musculus (Mouse).